We begin with the raw amino-acid sequence, 427 residues long: Peptidase B (427 aa).

Mn(2+) contacts are provided by K195 and D200. Residue K207 is part of the active site. Positions 218, 277, and 279 each coordinate Mn(2+). The active site involves R281.

This sequence belongs to the peptidase M17 family. In terms of assembly, homohexamer. Mn(2+) serves as cofactor.

The protein localises to the cytoplasm. The enzyme catalyses Release of an N-terminal amino acid, Xaa, from a peptide or arylamide. Xaa is preferably Glu or Asp but may be other amino acids, including Leu, Met, His, Cys and Gln.. In terms of biological role, probably plays an important role in intracellular peptide degradation. This is Peptidase B from Salmonella typhi.